The following is a 689-amino-acid chain: Putative pentatricopeptide repeat-containing protein At3g15130 (689 aa).

PPR repeat units follow at residues 5–39 (QRQNLVSILRVCTRKGLSDQGGQVHCYLLKSGSGL), 40–70 (NLITSNYLIDMYCKCREPLMAYKVFDSMPER), 71–105 (NVVSWSALMSGHVLNGDLKGSLSLFSEMGRQGIYP), 106–140 (NEFTFSTNLKACGLLNALEKGLQIHGFCLKIGFEM), 141–171 (MVEVGNSLVDMYSKCGRINEAEKVFRRIVDR), 172–206 (SLISWNAMIAGFVHAGYGSKALDTFGMMQEANIKE), 209–243 (DEFTLTSLLKACSSTGMIYAGKQIHGFLVRSGFHC), 246–276 (SATITGSLVDLYVKCGYLFSARKAFDQIKEK), 277–311 (TMISWSSLILGYAQEGEFVEAMGLFKRLQELNSQI), 312–342 (DSFALSSIIGVFADFALLRQGKQMQALAVKL), 347–377 (ETSVLNSVVDMYLKCGLVDEAEKCFAEMQLK), 378–412 (DVISWTVVITGYGKHGLGKKSVRIFYEMLRHNIEP), 413–448 (DEVCYLAVLSACSHSGMIKEGEELFSKLLETHGIKP), and 449–479 (RVEHYACVVDLLGRAGRLKEAKHLIDTMPIK). Residues 484–559 (IWQTLLSLCR…EAGMSWVEIE (76 aa)) form a type E motif region. A type E(+) motif region spans residues 560–590 (REVHFFRSGEDSHPLTPVIQETLKEAERRLR). The type DYW motif stretch occupies residues 592–689 (ELGYVYGLKH…DGCCSCGDYW (98 aa)).

It belongs to the PPR family. PCMP-H subfamily.

The sequence is that of Putative pentatricopeptide repeat-containing protein At3g15130 (PCMP-H86) from Arabidopsis thaliana (Mouse-ear cress).